A 343-amino-acid polypeptide reads, in one-letter code: Tetraacyldisaccharide 4'-kinase (343 aa).

Residue 51-58 participates in ATP binding; the sequence is TVGGAGKT.

Belongs to the LpxK family.

The catalysed reaction is a lipid A disaccharide + ATP = a lipid IVA + ADP + H(+). The protein operates within glycolipid biosynthesis; lipid IV(A) biosynthesis; lipid IV(A) from (3R)-3-hydroxytetradecanoyl-[acyl-carrier-protein] and UDP-N-acetyl-alpha-D-glucosamine: step 6/6. Its function is as follows. Transfers the gamma-phosphate of ATP to the 4'-position of a tetraacyldisaccharide 1-phosphate intermediate (termed DS-1-P) to form tetraacyldisaccharide 1,4'-bis-phosphate (lipid IVA). The polypeptide is Tetraacyldisaccharide 4'-kinase (Xanthobacter autotrophicus (strain ATCC BAA-1158 / Py2)).